The primary structure comprises 463 residues: L-2-hydroxyglutarate dehydrogenase, mitochondrial (463 aa).

Residues 1–51 constitute a mitochondrion transit peptide; sequence MVPALRYLVGACGRARGLFAGGSPGACGFASGRPRPLCGGSRSASTSSFDI. N6-acetyllysine is present on residues Lys104, Lys155, and Lys173.

The protein belongs to the L2HGDH family. FAD serves as cofactor. In terms of tissue distribution, widely expressed. Highly expressed in brain, testis and muscle. Expressed to a lower extent in lymphocytes, fibroblasts, keratinocytes, placenta, bladder, small intestine, liver and bone marrow.

It localises to the mitochondrion. The catalysed reaction is (S)-2-hydroxyglutarate + A = 2-oxoglutarate + AH2. The sequence is that of L-2-hydroxyglutarate dehydrogenase, mitochondrial (L2HGDH) from Homo sapiens (Human).